Here is a 562-residue protein sequence, read N- to C-terminus: MDEVTRTAQRSPSITETHAGETKLAGPGEKEGDVESPVDPSADSEQNRQQITGLQLFAILASVTLSAFLMLLDGSIIGVAIPNITSQFHSIDDIGWYTAAYQLASAALQPLSGKIYSSFSTKWTYLFFFGLFELGSLICGVANSSSMLIGGRAVAGLGSSGLLNGGMTIIAGAVPLEKRPVYTGIYLGISQLGIVCGPLIGGALTEYTTWRWCFYINLPVGAVTAILLLFLQVPELTEKPRFTFALVRRVIPELDLIGFTLFAPAAIMVLLALYYGGNDFPWDSSQVIGLFCGAGVTIIVFALWERRVGDRAMIPPSMVSHRIVYTSAINGAALVASILVAAQYLPIYFQGVRGYGPAMSGVNTLPGILSQLLTVILSGVLVQKVGYYLPFAAAGSAISAVGNGIVTLFSPTTPTAKWIGYQIVLGSGRGIGMQMGIIAIQNLLPPEKISVGIAFMIFCQNFAGAIFVVVGEVIFTQQLVKQIQAHAPSVKVDAALAAGASSSSLRALVPPGSPELQGVLLAFSNSVDRVFYLLMSLSLAGFVAAFGMGWVDTRKKNKSETE.

Residues 1-16 (MDEVTRTAQRSPSITE) are compositionally biased toward polar residues. Residues 1–45 (MDEVTRTAQRSPSITETHAGETKLAGPGEKEGDVESPVDPSADSE) form a disordered region. A helical transmembrane segment spans residues 57–77 (FAILASVTLSAFLMLLDGSII). An N-linked (GlcNAc...) asparagine glycan is attached at Asn-83. 13 helical membrane-spanning segments follow: residues 94-113 (IGWY…PLSG), 123-143 (WTYL…GVAN), 154-174 (VAGL…AGAV), 184-204 (GIYL…GGAL), 213-233 (CFYI…FLQV), 256-276 (LIGF…LYYG), 284-304 (SSQV…FALW), 329-349 (INGA…PIYF), 362-382 (VNTL…GVLV), 389-409 (LPFA…VTLF), 418-438 (WIGY…MGII), 451-471 (VGIA…VVVG), and 530-550 (VFYL…GMGW). The N-linked (GlcNAc...) asparagine glycan is linked to Asn-557.

This sequence belongs to the major facilitator superfamily. TCR/Tet family.

Its subcellular location is the cell membrane. In terms of biological role, MFS-type transporter; part of the gene cluster that mediates the biosynthesis of calbistrin A and related compounds. Calbistrin A is a secondary metabolite with an interesting structure that was recently found to have bioactivity against leukemia cells. It consists of two polyketides linked by an ester bond: a bicyclic decalin containing polyketide and a linear 12 carbon dioic acid structure. Required for the secretion of calbistrin A and calbistrin C, as well as of related compounds decumbenone A, B and C. This Penicillium decumbens protein is MFS-type transporter calB.